A 256-amino-acid polypeptide reads, in one-letter code: Follistatin-related protein 3 (256 aa).

A signal peptide spans 1 to 23; that stretch reads MRSGALWPLLWGALVWTVGSVGA. The region spanning 34–105 is the TB domain; it reads GVCWLQQGRE…SCDGVECGPG (72 aa). 8 disulfides stabilise this stretch: cysteine 36–cysteine 59, cysteine 46–cysteine 90, cysteine 60–cysteine 93, cysteine 97–cysteine 108, cysteine 102–cysteine 117, cysteine 119–cysteine 151, cysteine 123–cysteine 144, and cysteine 133–cysteine 165. An N-linked (GlcNAc...) asparagine glycan is attached at asparagine 71. The Follistatin-like 1 domain maps to 97-117; the sequence is CDGVECGPGKACRMLGGRPHC. Kazal-like domains lie at 111–167 and 187–243; these read LGGR…RCQK and SAHC…ICTG. Residues 168–191 form the Follistatin-like 2 domain; that stretch reads SCAQVVCPRPQSCLVDQTGSAHCV. Disulfide bonds link cysteine 193–cysteine 227, cysteine 198–cysteine 220, and cysteine 209–cysteine 241. Asparagine 213 is a glycosylation site (N-linked (GlcNAc...) asparagine).

Interacts with INHBA and INHBB. Interacts with FN1. Interacts with ADAM12. Interacts with MLLT10; the interaction enhances MLLT10 in vitro transcriptional activity and self-association. Interacts with MSTN. In terms of tissue distribution, abundantly expressed in heart, lung, kidney and testis. Continuously expressed in embryonic heart.

It is found in the secreted. The protein resides in the nucleus. Functionally, the secreted form is a binding and antagonizing protein for members of the TGF-beta family, such as activin, BMP2 and MSTN. Inhibits activin A-, activin B-, BMP2- and MSDT-induced cellular signaling; more effective on activin A than on activin B. Involved in bone formation; inhibits osteoclast differentiation. Involved in hematopoiesis; involved in differentiation of hemopoietic progenitor cells, increases hematopoietic cell adhesion to fibronectin and seems to contribute to the adhesion of hematopoietic precursor cells to the bone marrow stroma. The nuclear form is probably involved in transcriptional regulation via interaction with MLLT10. The sequence is that of Follistatin-related protein 3 (Fstl3) from Mus musculus (Mouse).